The primary structure comprises 469 residues: Adenosylhomocysteinase (469 aa).

The substrate site is built by Thr63, Asp139, and Glu164. 165–167 (TTT) contacts NAD(+). The substrate site is built by Lys194 and Asp198. NAD(+)-binding positions include Asn199, 228–233 (GYGDVG), Glu251, Asn300, 321–323 (IGH), and Asn375.

This sequence belongs to the adenosylhomocysteinase family. NAD(+) serves as cofactor.

Its subcellular location is the cytoplasm. The catalysed reaction is S-adenosyl-L-homocysteine + H2O = L-homocysteine + adenosine. Its pathway is amino-acid biosynthesis; L-homocysteine biosynthesis; L-homocysteine from S-adenosyl-L-homocysteine: step 1/1. In terms of biological role, may play a key role in the regulation of the intracellular concentration of adenosylhomocysteine. The polypeptide is Adenosylhomocysteinase (Pseudomonas syringae pv. syringae (strain B728a)).